The chain runs to 386 residues: Lipid-A-disaccharide synthase (386 aa).

This sequence belongs to the LpxB family.

The catalysed reaction is a lipid X + a UDP-2-N,3-O-bis[(3R)-3-hydroxyacyl]-alpha-D-glucosamine = a lipid A disaccharide + UDP + H(+). It functions in the pathway bacterial outer membrane biogenesis; LPS lipid A biosynthesis. Functionally, condensation of UDP-2,3-diacylglucosamine and 2,3-diacylglucosamine-1-phosphate to form lipid A disaccharide, a precursor of lipid A, a phosphorylated glycolipid that anchors the lipopolysaccharide to the outer membrane of the cell. The chain is Lipid-A-disaccharide synthase from Chromobacterium violaceum (strain ATCC 12472 / DSM 30191 / JCM 1249 / CCUG 213 / NBRC 12614 / NCIMB 9131 / NCTC 9757 / MK).